The sequence spans 856 residues: Mechanosensitive ion channel protein 6 (856 aa).

2 disordered regions span residues 45–86 (GEGN…DPPT) and 116–226 (RGLT…PFAA). Basic and acidic residues-rich tracts occupy residues 70-85 (QQKD…EDPP) and 129-140 (TKRDPVGRRDSR). Polar residues predominate over residues 155–168 (SGNNAPIQRSSSTL). Residue Ser211 is modified to Phosphoserine. Over residues 217–226 (EEEEDDPFAA) the composition is skewed to acidic residues. The next 4 helical transmembrane spans lie at 242 to 262 (IVLE…TLAI), 283 to 303 (LVLI…VFFI), 323 to 343 (AVQN…LFDE), and 360 to 380 (IFVC…LVKV). Phosphoserine is present on Ser462. 2 helical membrane-spanning segments follow: residues 615 to 635 (MVNI…LGIT) and 651 to 671 (AFIF…LFVI).

Belongs to the MscS (TC 1.A.23) family.

The protein resides in the membrane. In terms of biological role, mechanosensitive channel that opens in response to stretch forces in the membrane lipid bilayer. This is Mechanosensitive ion channel protein 6 (MSL6) from Arabidopsis thaliana (Mouse-ear cress).